We begin with the raw amino-acid sequence, 196 residues long: HTH-type transcriptional regulator BetI (196 aa).

The region spanning 8 to 68 is the HTH tetR-type domain; sequence EVRRAQLIDA…ATMRHILRDL (61 aa). Residues 31–50 constitute a DNA-binding region (H-T-H motif); sequence TLASVAQRANISTGIVSHYF.

Its pathway is amine and polyamine biosynthesis; betaine biosynthesis via choline pathway [regulation]. Its function is as follows. Repressor involved in the biosynthesis of the osmoprotectant glycine betaine. It represses transcription of the choline transporter BetT and the genes of BetAB involved in the synthesis of glycine betaine. This chain is HTH-type transcriptional regulator BetI, found in Paraburkholderia phymatum (strain DSM 17167 / CIP 108236 / LMG 21445 / STM815) (Burkholderia phymatum).